The chain runs to 217 residues: PRA1 family protein B3 (217 aa).

The segment at 1–24 is disordered; sequence MMANPPTLPISDHSGGGSQSQQPV. Helical transmembrane passes span 76-96, 98-118, 138-158, 162-182, and 193-213; these read LPYF…LSLL, HPFS…LYLF, LGVL…GSLL, LMIG…EDLF, and LLSF…STPA.

This sequence belongs to the PRA1 family. In terms of assembly, interacts with PRA1B1, PRA1B2, PRA1B4, PRA1B5, PRA1B6 and PRA1E. In terms of tissue distribution, expressed in hypocotyls and shoot apex.

It is found in the endosome membrane. In terms of biological role, may be involved in both secretory and endocytic intracellular trafficking in the endosomal/prevacuolar compartments. In Arabidopsis thaliana (Mouse-ear cress), this protein is PRA1 family protein B3 (PRA1B3).